Consider the following 39-residue polypeptide: Adipokinetic prohormone type 2 (39 aa).

Gln-1 carries the pyrrolidone carboxylic acid modification. Residue Trp-8 is modified to Tryptophan amide.

This sequence belongs to the AKH/HRTH/RPCH family. As to quaternary structure, adipokinetic hormone precursor-related peptide (APRP) can form three type of disulfide-bond dimers: p1 (alpha-alpha), p2 (alpha-beta), and p3 (beta-beta).

The protein resides in the secreted. Functionally, this hormone, released from cells in the corpora cardiaca, causes release of diglycerides from the fat body and stimulation of muscles to use these diglycerides as an energy source during energy-demanding processes. The chain is Adipokinetic prohormone type 2 from Schistocerca gregaria (Desert locust).